The primary structure comprises 463 residues: MSDTSATKTEIRVIIVGGSVAGLTLAHCLAKANISHVVLEKRAEISPQEGAFLGIWPNGGRIFDQLGVYADLEQCTVPIHTMRVRFPDGFSFSSELPRCVQERFGYPIVSLDRQKVLEILHDRYPAKSNIHINKRVTEIRQTEREAQVVTDDGAVYKGDLVVGADGIHSAVRAEMWRQAKGLVGRRDGQAFAVEYACVFGISTPIPGLESGEHVNSYSDGLCVITFHGKDGRIFWFILIKLHKRFVYPKTPRFSASDAAKVCAEYASVPVWGEICVRDLWRNKTSASMTALEEGLLKTWNFKRVVLLGDSIHKMTPNIGQGANTAAEDAAVLASLLQRLSTSASSTTSGTIDAVLREYVSLRYKRVKSTYQRAYFGARLHTRDNVLKCFVGRYIFPRFSQQVLERTSQAIAGAPLVDFLPTPKRSGAGWSDYAGSPEVGAPTVPWLVISLPVLASVLCYLMFA.

Positions 40, 54, and 113 each coordinate FAD. Residue Tyr217 is part of the active site. FAD-binding residues include Asp309 and Ala322. The helical transmembrane segment at 443-463 (VPWLVISLPVLASVLCYLMFA) threads the bilayer.

This sequence belongs to the paxM FAD-dependent monooxygenase family. It depends on FAD as a cofactor.

It is found in the membrane. Its pathway is secondary metabolite biosynthesis; terpenoid biosynthesis. In terms of biological role, FAD-dependent monooxygenase; part of the gene cluster that mediates the biosynthesis of calidodehydroaustin, a fungal meroterpenoid. The first step of the pathway is the synthesis of 3,5-dimethylorsellinic acid by the polyketide synthase ausA. 3,5-dimethylorsellinic acid is then prenylated by the polyprenyl transferase ausN. Further epoxidation by the FAD-dependent monooxygenase ausM and cyclization by the probable terpene cyclase ausL lead to the formation of protoaustinoid A. Protoaustinoid A is then oxidized to spiro-lactone preaustinoid A3 by the combined action of the FAD-binding monooxygenases ausB and ausC, and the dioxygenase ausE. Acid-catalyzed keto-rearrangement and ring contraction of the tetraketide portion of preaustinoid A3 by ausJ lead to the formation of preaustinoid A4. The aldo-keto reductase ausK, with the help of ausH, is involved in the next step by transforming preaustinoid A4 into isoaustinone which is in turn hydroxylated by the P450 monooxygenase ausI to form austinolide. The cytochrome P450 monooxygenase ausG modifies austinolide to austinol. Austinol is further acetylated to austin by the O-acetyltransferase ausP, which spontaneously changes to dehydroaustin. The cytochrome P450 monooxygenase ausR then converts dehydroaustin is into 7-dehydrodehydroaustin. The hydroxylation catalyzed by ausR permits the O-acetyltransferase ausQ to add an additional acetyl group to the molecule, leading to the formation of acetoxydehydroaustin. The short chain dehydrogenase ausT catalyzes the reduction of the double bond present between carbon atoms 1 and 2 to convert 7-dehydrodehydroaustin into 1,2-dihydro-7-hydroxydehydroaustin. AusQ catalyzes not only an acetylation reaction but also the addition of the PKS ausV diketide product to 1,2-dihydro-7-hydroxydehydroaustin, forming precalidodehydroaustin. Finally, the iron/alpha-ketoglutarate-dependent dioxygenase converts precalidodehydroaustin into calidodehydroaustin. The polypeptide is FAD-dependent monooxygenase ausM (Aspergillus calidoustus).